We begin with the raw amino-acid sequence, 78 residues long: Beta-defensin 105A (78 aa).

The first 27 residues, 1–27 (MALIKKTFFFLFAMFFILVQLSSGCQA), serve as a signal peptide directing secretion. Cystine bridges form between C43–C74, C53–C67, and C57–C73.

It belongs to the beta-defensin family.

Its subcellular location is the secreted. Functionally, has antimicrobial activity. The polypeptide is Beta-defensin 105A (DEFB105A) (Pan troglodytes (Chimpanzee)).